The sequence spans 338 residues: Phosphonates-binding periplasmic protein (338 aa).

A signal peptide spans 1–26 (MNAKIIASLAFTSMFSLSTLLSPAHA).

The protein belongs to the phosphate/phosphite/phosphonate binding protein family. The complex is composed of two ATP-binding proteins (PhnC), two transmembrane proteins (PhnE) and a solute-binding protein (PhnD).

It is found in the periplasm. In terms of biological role, phosphonate binding protein that is part of the phosphonate uptake system. Exhibits high affinity for 2-aminoethylphosphonate, and somewhat less affinity to ethylphosphonate, methylphosphonate, phosphonoacetate and phenylphosphonate. In Escherichia coli (strain K12), this protein is Phosphonates-binding periplasmic protein (phnD).